We begin with the raw amino-acid sequence, 409 residues long: Phosphopentomutase (409 aa).

Asp-10, Asp-302, His-307, Asp-343, His-344, and His-355 together coordinate Mn(2+).

Belongs to the phosphopentomutase family. The cofactor is Mn(2+).

The protein resides in the cytoplasm. It catalyses the reaction 2-deoxy-alpha-D-ribose 1-phosphate = 2-deoxy-D-ribose 5-phosphate. The catalysed reaction is alpha-D-ribose 1-phosphate = D-ribose 5-phosphate. Its pathway is carbohydrate degradation; 2-deoxy-D-ribose 1-phosphate degradation; D-glyceraldehyde 3-phosphate and acetaldehyde from 2-deoxy-alpha-D-ribose 1-phosphate: step 1/2. In terms of biological role, isomerase that catalyzes the conversion of deoxy-ribose 1-phosphate (dRib-1-P) and ribose 1-phosphate (Rib-1-P) to deoxy-ribose 5-phosphate (dRib-5-P) and ribose 5-phosphate (Rib-5-P), respectively. The polypeptide is Phosphopentomutase (Chelativorans sp. (strain BNC1)).